The chain runs to 797 residues: Trafficking protein particle complex subunit 12 (797 aa).

Disordered regions lie at residues 1–257 (META…PSLS) and 286–338 (SNPN…VPES). A compositionally biased stretch (low complexity) spans 9–23 (QSPSEASPSAQAGPE). A compositionally biased stretch (basic and acidic residues) spans 29–43 (MSREEESQPLYHEET). Positions 47 to 58 (GGDEFASEENEP) are enriched in acidic residues. Basic and acidic residues-rich tracts occupy residues 66 to 75 (FGDKLNEHMM) and 107 to 121 (ATDH…KEVV). Residues serine 125 and serine 128 each carry the phosphoserine modification. Threonine 130 is subject to Phosphothreonine. Over residues 173–185 (VGPKDSLAPREEQ) the composition is skewed to basic and acidic residues. The span at 206-216 (IFSQATATPSQ) shows a compositional bias: polar residues. A compositionally biased stretch (low complexity) spans 232 to 244 (SPSFSSTSETSAK). Serine 234, serine 309, and serine 314 each carry phosphoserine. TPR repeat units lie at residues 607 to 640 (GRVL…YPEQ), 642 to 675 (PQLL…TQKL), 682 to 715 (IMVL…DPTN), and 716 to 749 (AVAN…DPRH).

As to quaternary structure, component of the multisubunit TRAPP (transport protein particle) complex, which includes at least TRAPPC2, TRAPPC2L, TRAPPC3, TRAPPC3L, TRAPPC4, TRAPPC5, TRAPPC8, TRAPPC9, TRAPPC10, TRAPPC11 and TRAPPC12. Interacts with CENPE. In terms of processing, phosphorylated as the cells enter mitosis but is dephosphorylated at or before the onset of anaphase. The phosphorylated form recruits CENPE to kinetochores more efficiently than the non-phosphorylated form.

It localises to the endoplasmic reticulum-Golgi intermediate compartment. The protein localises to the nucleus. Functionally, component of the TRAPP complex, which is involved in endoplasmic reticulum to Golgi apparatus trafficking at a very early stage. Also plays a role in chromosome congression, kinetochore assembly and stability and controls the recruitment of CENPE to the kinetochores. The polypeptide is Trafficking protein particle complex subunit 12 (Mus musculus (Mouse)).